Consider the following 258-residue polypeptide: L-fucose dehydrogenase (258 aa).

The NADP(+) site is built by Ser17, Ile19, Arg39, His40, Glu63, Leu64, and Asn90. Beta-L-fucose is bound by residues Asn94, Ser140, Lys141, Gln147, and Tyr153. Positions 153 and 157 each coordinate NADP(+). Tyr153 functions as the Proton acceptor in the catalytic mechanism. Ala184 and Glu185 together coordinate beta-L-fucose. Positions 186 and 188 each coordinate NADP(+).

The protein belongs to the short-chain dehydrogenases/reductases (SDR) family. As to quaternary structure, homotetramer; dimer of dimers.

The enzyme catalyses beta-L-fucose + NADP(+) = L-fucono-1,5-lactone + NADPH + H(+). It carries out the reaction D-arabinose + NADP(+) = D-arabinono-1,5-lactone + NADPH + H(+). Its pathway is carbohydrate degradation; L-fucose degradation. In terms of biological role, L-fucose dehydrogenase involved in an L-fucose degradation pathway. Catalyzes the oxidation of L-fucose to L-fucono-1,5-lactone. Can also act on D-arabinose, with lower catalytic efficiency, and has weak activity with L-galactose and 4-deoxy-L-fucose. Shows a preference for NADP(+) over NAD(+). The protein is L-fucose dehydrogenase of Burkholderia multivorans (strain ATCC 17616 / 249).